A 323-amino-acid polypeptide reads, in one-letter code: Serine/threonine-protein phosphatase PP1-gamma catalytic subunit (323 aa).

Ala2 carries the N-acetylalanine modification. Residues Asp64, His66, Asp92, and Asn124 each coordinate Mn(2+). The Proton donor role is filled by His125. Residues His173 and His248 each coordinate Mn(2+). Residues 302 to 323 (KKPNATRPVTPPRGMITKQAKK) form a disordered region. Phosphothreonine occurs at positions 307 and 311.

The protein belongs to the PPP phosphatase family. PP-1 subfamily. As to quaternary structure, PP1 comprises a catalytic subunit, PPP1CA, PPP1CB or PPP1CC, which is folded into its native form by inhibitor 2 and glycogen synthetase kinase 3, and then complexed to one or several targeting or regulatory subunits. PPP1R12A, PPP1R12B and PPP1R12C mediate binding to myosin. PPP1R3A (in skeletal muscle), PPP1R3B (in liver), PPP1R3C, PPP1R3D and PPP1R3F (in brain) mediate binding to glycogen. Interacts with cyanobacterial toxin microcystin; disulfide-linked. Interacts with PPP1R3B and PPP1R7. Isoform 2 interacts with SPZ1. Interacts with CDCA2. PPP1R15A and PPP1R15B mediate binding to EIF2S1. Part of a complex containing PPP1R15B, PP1 and NCK1/2. Interacts with IKFZ1; the interaction targets PPP1CC to pericentromeric heterochromatin, dephosphorylates IKAROS, stabilizes it and prevents it from degradation. Interacts with PPP1R42; the interaction is direct. Interacts with NOM1 and PPP1R8. Component of the PTW/PP1 phosphatase complex, composed of PPP1R10/PNUTS, TOX4, WDR82, and PPP1CA or PPP1CB or PPP1CC. Interacts with PPP1R8. Interacts with isoform 1 and isoform 4 NEK2. Interacts with URI1; the interaction is phosphorylation-dependent and occurs in a growth factor-dependent manner. Interacts with FOXP3. Interacts with TMEM225 (via RVxF motif). Interacts with MKI67. Interacts with RRP1B; this targets PPP1CC to the nucleolus. Interacts with PPP1R2B. Found in a complex with PPP1CA, PPP1CC, SHC1 and PEAK1. Interacts with DYNLT4. Interacts (via RVxF motif) with FIRRM; regulates PLK1 kinase activity. Interacts with the KNL1 complex subunit KNL1; the interaction is direct and mutually exclusive with KNL1 binding to microtubules. Component of the SHOC2-MRAS-PP1c (SMP) complex consisting of SHOC2, GTP-bound M-Ras/MRAS and the catalytic subunit of protein phosphatase 1 (either PPP1CA, PPP1CB or PPP1CC). SHOC2 and PP1c preferably bind M-Ras/MRAS, but they also bind K-Ras/KRAS, N-Ras/NRAS and H-Ras/HRAS; these interactions are GTP-dependent and both SHOC2 and PP1c are required to form a stable complex. Interacts with SHOC2 in the absence of Ras GTPases. Mn(2+) serves as cofactor. Phosphorylated by NEK2.

The protein localises to the cytoplasm. Its subcellular location is the nucleus. The protein resides in the nucleolus. It is found in the nucleoplasm. It localises to the nucleus speckle. The protein localises to the chromosome. Its subcellular location is the centromere. The protein resides in the kinetochore. It is found in the cleavage furrow. It localises to the midbody. The protein localises to the mitochondrion. Its subcellular location is the cytoskeleton. The protein resides in the microtubule organizing center. The enzyme catalyses O-phospho-L-seryl-[protein] + H2O = L-seryl-[protein] + phosphate. It carries out the reaction O-phospho-L-threonyl-[protein] + H2O = L-threonyl-[protein] + phosphate. With respect to regulation, inactivated by binding to URI1. The phosphatase activity of the PPP1R15A-PP1 complex toward EIF2S1 is specifically inhibited by Salubrinal, a drug that protects cells from endoplasmic reticulum stress. In terms of biological role, protein phosphatase that associates with over 200 regulatory proteins to form highly specific holoenzymes which dephosphorylate hundreds of biological targets. Protein phosphatase 1 (PP1) is essential for cell division, and participates in the regulation of glycogen metabolism, muscle contractility and protein synthesis. Dephosphorylates RPS6KB1. Involved in regulation of ionic conductances and long-term synaptic plasticity. May play an important role in dephosphorylating substrates such as the postsynaptic density-associated Ca(2+)/calmodulin dependent protein kinase II. Component of the PTW/PP1 phosphatase complex, which plays a role in the control of chromatin structure and cell cycle progression during the transition from mitosis into interphase. In balance with CSNK1D and CSNK1E, determines the circadian period length, through the regulation of the speed and rhythmicity of PER1 and PER2 phosphorylation. May dephosphorylate CSNK1D and CSNK1E. Regulates the recruitment of the SKA complex to kinetochores. Dephosphorylates the 'Ser-418' residue of FOXP3 in regulatory T-cells (Treg) from patients with rheumatoid arthritis, thereby inactivating FOXP3 and rendering Treg cells functionally defective. Together with PPP1CA (PP1-alpha subunit), dephosphorylates IFIH1/MDA5 and RIG-I leading to their activation and a functional innate immune response. Core component of the SHOC2-MRAS-PP1c (SMP) holophosphatase complex that regulates the MAPK pathway activation. The SMP complex specifically dephosphorylates the inhibitory phosphorylation at 'Ser-259' of RAF1 kinase, 'Ser-365' of BRAF kinase and 'Ser-214' of ARAF kinase, stimulating their kinase activities. Dephosphorylates MKI67 at the onset of anaphase. The SMP complex enhances the dephosphorylation activity and substrate specificity of PP1c. In Homo sapiens (Human), this protein is Serine/threonine-protein phosphatase PP1-gamma catalytic subunit (PPP1CC).